The primary structure comprises 335 residues: Ornithine carbamoyltransferase, catabolic (335 aa).

Carbamoyl phosphate contacts are provided by residues 59–62 (STRT), glutamine 86, arginine 110, and 137–140 (HPTQ). L-ornithine-binding positions include asparagine 169, aspartate 233, and 237–238 (SM). Residues 274-275 (CL) and arginine 319 contribute to the carbamoyl phosphate site.

It belongs to the aspartate/ornithine carbamoyltransferase superfamily. OTCase family.

It localises to the cytoplasm. The catalysed reaction is carbamoyl phosphate + L-ornithine = L-citrulline + phosphate + H(+). It participates in amino-acid degradation; L-arginine degradation via ADI pathway; carbamoyl phosphate from L-arginine: step 2/2. Reversibly catalyzes the transfer of the carbamoyl group from carbamoyl phosphate (CP) to the N(epsilon) atom of ornithine (ORN) to produce L-citrulline. The sequence is that of Ornithine carbamoyltransferase, catabolic (arcB) from Bacillus licheniformis (strain ATCC 14580 / DSM 13 / JCM 2505 / CCUG 7422 / NBRC 12200 / NCIMB 9375 / NCTC 10341 / NRRL NRS-1264 / Gibson 46).